The primary structure comprises 370 residues: Homospermidine synthase (370 aa).

Belongs to the deoxyhypusine synthase family. As to quaternary structure, homotetramer. The cofactor is NAD(+).

The catalysed reaction is putrescine + spermidine = sym-homospermidine + propane-1,3-diamine. It participates in alkaloid biosynthesis; pyrrolizidine alkaloid biosynthesis. Catalyzes the transfer of an aminobutyl unit from spermidine onto putrescine. The resulting polyamine homospermidine is a precursor in the biosynthesis of pyrrolizidine alkaloids. This Senecio vulgaris (Common groundsel) protein is Homospermidine synthase (HSS1).